An 83-amino-acid polypeptide reads, in one-letter code: Cytochrome c oxidase subunit 7A2, mitochondrial (83 aa).

A mitochondrion-targeting transit peptide spans 1–23 (MLRNVLALRQIAQRTISTTSRRH). Residues 24–48 (FENKVPEKQKLFQEDNGMPVHLKGG) lie on the Mitochondrial matrix side of the membrane. Lys33 carries the post-translational modification N6-acetyllysine. Residues 49–77 (TSDALLYRATMLLTVGGTAYAIYMLAMAA) form a helical membrane-spanning segment. At 78-83 (FPKKQN) the chain is on the mitochondrial intermembrane side.

This sequence belongs to the cytochrome c oxidase VIIa family. In terms of assembly, component of the cytochrome c oxidase (complex IV, CIV), a multisubunit enzyme composed of 14 subunits. The complex is composed of a catalytic core of 3 subunits MT-CO1, MT-CO2 and MT-CO3, encoded in the mitochondrial DNA, and 11 supernumerary subunits COX4I, COX5A, COX5B, COX6A, COX6B, COX6C, COX7A, COX7B, COX7C, COX8 and NDUFA4, which are encoded in the nuclear genome. The complex exists as a monomer or a dimer and forms supercomplexes (SCs) in the inner mitochondrial membrane with NADH-ubiquinone oxidoreductase (complex I, CI) and ubiquinol-cytochrome c oxidoreductase (cytochrome b-c1 complex, complex III, CIII), resulting in different assemblies (supercomplex SCI(1)III(2)IV(1) and megacomplex MCI(2)III(2)IV(2)). Interacts with PET100.

It is found in the mitochondrion inner membrane. It functions in the pathway energy metabolism; oxidative phosphorylation. In terms of biological role, component of the cytochrome c oxidase, the last enzyme in the mitochondrial electron transport chain which drives oxidative phosphorylation. The respiratory chain contains 3 multisubunit complexes succinate dehydrogenase (complex II, CII), ubiquinol-cytochrome c oxidoreductase (cytochrome b-c1 complex, complex III, CIII) and cytochrome c oxidase (complex IV, CIV), that cooperate to transfer electrons derived from NADH and succinate to molecular oxygen, creating an electrochemical gradient over the inner membrane that drives transmembrane transport and the ATP synthase. Cytochrome c oxidase is the component of the respiratory chain that catalyzes the reduction of oxygen to water. Electrons originating from reduced cytochrome c in the intermembrane space (IMS) are transferred via the dinuclear copper A center (CU(A)) of subunit 2 and heme A of subunit 1 to the active site in subunit 1, a binuclear center (BNC) formed by heme A3 and copper B (CU(B)). The BNC reduces molecular oxygen to 2 water molecules using 4 electrons from cytochrome c in the IMS and 4 protons from the mitochondrial matrix. This is Cytochrome c oxidase subunit 7A2, mitochondrial (Cox7a2) from Rattus norvegicus (Rat).